The sequence spans 235 residues: Pro-opiomelanocortin (235 aa).

Positions 1–26 (MPRFCNSRSGALLLALLLQTSIDVWS) are cleaved as a signal peptide. The residue at position 87 (Phe-87) is a Phenylalanine amide. The disordered stretch occupies residues 88 to 128 (GPRNSSSAGGSAQRRAEEETAGGDGRPEPSPREGKRSYSME). Positions 112–128 (GRPEPSPREGKRSYSME) are enriched in basic and acidic residues. At Ser-124 the chain carries N-acetylserine; in Corticotropin. Position 136 is a valine amide (Val-136). Asn-152 is a glycosylation site (N-linked (GlcNAc...) asparagine). Phosphoserine is present on Ser-154. The tract at residues 169-209 (EQPDGLEQVLEPDTEKADGPYRVEHFRWGNPPKDKRYGGFM) is disordered. Residues 181–205 (DTEKADGPYRVEHFRWGNPPKDKRY) are compositionally biased toward basic and acidic residues.

This sequence belongs to the POMC family. Specific enzymatic cleavages at paired basic residues yield the different active peptides. ACTH and MSH are produced by the pituitary gland.

The protein localises to the secreted. Stimulates the adrenal glands to release cortisol. In terms of biological role, anorexigenic peptide. Increases the pigmentation of skin by increasing melanin production in melanocytes. Functionally, increases the pigmentation of skin by increasing melanin production in melanocytes. Its function is as follows. Endogenous orexigenic opiate. Endogenous opiate. The polypeptide is Pro-opiomelanocortin (Pomc) (Rattus norvegicus (Rat)).